We begin with the raw amino-acid sequence, 232 residues long: Cilia- and flagella-associated protein 95 (232 aa).

Topologically, residues Met1–Lys96 are extracellular. N-linked (GlcNAc...) asparagine glycosylation occurs at Asn75. The chain crosses the membrane as a helical span at residues Met97–Leu115. The Cytoplasmic segment spans residues Asn116 to Lys232. A mn region spans residues Leu153–Pro163.

Microtubule inner protein component of sperm flagellar doublet microtubules. Interacts with MYH9. Interacts with MYH10. As to expression, expressed in trachea multiciliated cells.

The protein localises to the cytoplasm. It is found in the cytoskeleton. The protein resides in the cilium axoneme. It localises to the flagellum axoneme. Its subcellular location is the cell membrane. Functionally, microtubule inner protein (MIP) part of the dynein-decorated doublet microtubules (DMTs) in cilia axoneme, which is required for motile cilia beating. In Bos taurus (Bovine), this protein is Cilia- and flagella-associated protein 95.